An 83-amino-acid polypeptide reads, in one-letter code: Translation initiation factor IF-1 (83 aa).

One can recognise an S1-like domain in the interval 1–72 (MAKEESIEMQ…TRGRIVYREA (72 aa)).

Belongs to the IF-1 family. In terms of assembly, component of the 30S ribosomal translation pre-initiation complex which assembles on the 30S ribosome in the order IF-2 and IF-3, IF-1 and N-formylmethionyl-tRNA(fMet); mRNA recruitment can occur at any time during PIC assembly.

The protein localises to the cytoplasm. In terms of biological role, one of the essential components for the initiation of protein synthesis. Stabilizes the binding of IF-2 and IF-3 on the 30S subunit to which N-formylmethionyl-tRNA(fMet) subsequently binds. Helps modulate mRNA selection, yielding the 30S pre-initiation complex (PIC). Upon addition of the 50S ribosomal subunit IF-1, IF-2 and IF-3 are released leaving the mature 70S translation initiation complex. The polypeptide is Translation initiation factor IF-1 (Coxiella burnetii (strain Dugway 5J108-111)).